Consider the following 299-residue polypeptide: Probable lipid kinase YegS (299 aa).

The DAGKc domain maps to 2 to 133 (AEFPASLLIL…IDMAQVNKQT (132 aa)). Residues T40, 66-72 (GDGTINE), and T95 contribute to the ATP site. The Mg(2+) site is built by L215, D218, and L220. Residue E271 is the Proton acceptor of the active site.

It belongs to the diacylglycerol/lipid kinase family. YegS lipid kinase subfamily. It depends on Mg(2+) as a cofactor. Ca(2+) serves as cofactor.

Its subcellular location is the cytoplasm. Functionally, probably phosphorylates lipids; the in vivo substrate is unknown. The polypeptide is Probable lipid kinase YegS (Escherichia coli (strain K12 / MC4100 / BW2952)).